The primary structure comprises 571 residues: uncharacterized protein (571 aa).

A disordered region spans residues 1–25; that stretch reads MAPSVATSLKAEILPSPRTSSPSSN. The FAD-binding FR-type domain occupies 135-389; the sequence is FSVFPAPILD…RGLHKNAFAT (255 aa). The tract at residues 447–479 is disordered; the sequence is NPLQKSSDDDASSTVSQQTETEMDSFEVKKDGT.

The protein belongs to the flavoprotein pyridine nucleotide cytochrome reductase family. FAD is required as a cofactor.

This is an uncharacterized protein from Schizosaccharomyces pombe (strain 972 / ATCC 24843) (Fission yeast).